Here is a 216-residue protein sequence, read N- to C-terminus: Adenylate kinase (216 aa).

Residue 10 to 15 (GAGKGT) coordinates ATP. Positions 30–59 (STGDIFRANIKEKTPLGIEAKRYMDNGQLV) are NMP. AMP-binding positions include Thr31, Arg36, 57–59 (QLV), 85–88 (GFPR), and Gln92. The LID stretch occupies residues 126–163 (GRRVCTSCGASYHIRFNPPKIEGKCDICDNELIQRKDD). Arg127 lines the ATP pocket. Zn(2+) contacts are provided by Cys130 and Cys133. 136–137 (SY) contributes to the ATP binding site. Zn(2+)-binding residues include Cys150 and Cys153. Residues Arg160 and Arg171 each coordinate AMP. Residue Glu199 coordinates ATP.

Belongs to the adenylate kinase family. As to quaternary structure, monomer.

The protein localises to the cytoplasm. It catalyses the reaction AMP + ATP = 2 ADP. It functions in the pathway purine metabolism; AMP biosynthesis via salvage pathway; AMP from ADP: step 1/1. Functionally, catalyzes the reversible transfer of the terminal phosphate group between ATP and AMP. Plays an important role in cellular energy homeostasis and in adenine nucleotide metabolism. This is Adenylate kinase from Clostridium botulinum (strain Loch Maree / Type A3).